Here is a 329-residue protein sequence, read N- to C-terminus: 4-hydroxythreonine-4-phosphate dehydrogenase (329 aa).

His136 and Thr137 together coordinate substrate. 3 residues coordinate a divalent metal cation: His166, His211, and His266. Substrate contacts are provided by Lys274, Asn283, and Arg292.

It belongs to the PdxA family. Homodimer. It depends on Zn(2+) as a cofactor. Mg(2+) serves as cofactor. Co(2+) is required as a cofactor.

The protein resides in the cytoplasm. The catalysed reaction is 4-(phosphooxy)-L-threonine + NAD(+) = 3-amino-2-oxopropyl phosphate + CO2 + NADH. It participates in cofactor biosynthesis; pyridoxine 5'-phosphate biosynthesis; pyridoxine 5'-phosphate from D-erythrose 4-phosphate: step 4/5. In terms of biological role, catalyzes the NAD(P)-dependent oxidation of 4-(phosphooxy)-L-threonine (HTP) into 2-amino-3-oxo-4-(phosphooxy)butyric acid which spontaneously decarboxylates to form 3-amino-2-oxopropyl phosphate (AHAP). The polypeptide is 4-hydroxythreonine-4-phosphate dehydrogenase (Citrobacter koseri (strain ATCC BAA-895 / CDC 4225-83 / SGSC4696)).